We begin with the raw amino-acid sequence, 116 residues long: Small ribosomal subunit protein uS13 (116 aa).

The segment at 88–116 is disordered; that stretch reads GSRHKKGLPVRGQHTKNNARTRKGPRKQA.

This sequence belongs to the universal ribosomal protein uS13 family. Part of the 30S ribosomal subunit. Forms a loose heterodimer with protein S19. Forms two bridges to the 50S subunit in the 70S ribosome.

Located at the top of the head of the 30S subunit, it contacts several helices of the 16S rRNA. In the 70S ribosome it contacts the 23S rRNA (bridge B1a) and protein L5 of the 50S subunit (bridge B1b), connecting the 2 subunits; these bridges are implicated in subunit movement. Contacts the tRNAs in the A and P-sites. In Finegoldia magna (strain ATCC 29328 / DSM 20472 / WAL 2508) (Peptostreptococcus magnus), this protein is Small ribosomal subunit protein uS13.